Here is a 76-residue protein sequence, read N- to C-terminus: uncharacterized protein (76 aa).

This is an uncharacterized protein from Enterobacteria phage T4 (Bacteriophage T4).